Here is a 130-residue protein sequence, read N- to C-terminus: MMSLRSAFALLPLFLFLIVANVESRKDVGEYWKLVMKDQDMPEEIQGLLDASNIKNSKTHAKENKGAIGEFEPCPNASAYGDNEIHANENKGAIGEFETRPNGSAYGDNEIGAEFTDDFEPRPSMTKYNA.

Tandem repeats lie at residues 60–85 (HAKENKGAIGEFEPCPNASAYGDNEI) and 86–111 (HANENKGAIGEFETRPNGSAYGDNEI). The segment at 60–111 (HAKENKGAIGEFEPCPNASAYGDNEIHANENKGAIGEFETRPNGSAYGDNEI) is 2 X 26 AA tandem repeats. Positions 79–130 (AYGDNEIHANENKGAIGEFETRPNGSAYGDNEIGAEFTDDFEPRPSMTKYNA) are disordered.

It to organ specific protein S2. Expressed in pods.

The polypeptide is Organ-specific protein P4 (Pisum sativum (Garden pea)).